The sequence spans 665 residues: Phenol hydroxylase (665 aa).

Residues 18-19 (PA), 43-45 (DKR), 51-56 (NGQADG), Gln118, Tyr290, Asp358, and 368-372 (GQGMN) contribute to the FAD site. Residue Asp55 participates in substrate binding. Substrate is bound at residue Tyr290.

It belongs to the PheA/TfdB FAD monooxygenase family. Homodimer. Requires FAD as cofactor.

The catalysed reaction is phenol + NADPH + O2 + H(+) = catechol + NADP(+) + H2O. The protein operates within aromatic compound metabolism; phenol degradation. Its activity is regulated as follows. Inhibited by excess phenol. Heavy metals such AsCuSO(4), AgNO(3), or HgCl(2) severely inhibit activity. Hydroxylates phenol to catechol. Phenol is the best substrate, but the enzyme also accepts isomeric diphenols, hydroxyl-, amino-, halogen- or methyl-substituted phenols and, to a lesser degree, cresols. The protein is Phenol hydroxylase of Cutaneotrichosporon cutaneum (Yeast).